A 206-amino-acid chain; its full sequence is Small ribosomal subunit protein uS4 (206 aa).

Residues 96–156 form the S4 RNA-binding domain; that stretch reads GRLDNVVYRM…EKSKKQARIK (61 aa).

The protein belongs to the universal ribosomal protein uS4 family. Part of the 30S ribosomal subunit. Contacts protein S5. The interaction surface between S4 and S5 is involved in control of translational fidelity.

One of the primary rRNA binding proteins, it binds directly to 16S rRNA where it nucleates assembly of the body of the 30S subunit. Its function is as follows. With S5 and S12 plays an important role in translational accuracy. In Glaesserella parasuis serovar 5 (strain SH0165) (Haemophilus parasuis), this protein is Small ribosomal subunit protein uS4.